The chain runs to 224 residues: Large ribosomal subunit protein uL11c (224 aa).

The N-terminal 66 residues, 1–66 (MAQPLVAAPS…SHRRLSIVAM (66 aa)), are a transit peptide targeting the chloroplast. 2 positions are modified to N6,N6,N6-trimethyllysine: Lys75 and Lys111.

As to quaternary structure, component of the chloroplast large ribosomal subunit (LSU). Mature 70S chloroplast ribosomes of higher plants consist of a small (30S) and a large (50S) subunit. The 30S small subunit contains 1 molecule of ribosomal RNA (16S rRNA) and 24 different proteins. The 50S large subunit contains 3 rRNA molecules (23S, 5S and 4.5S rRNA) and 33 different proteins.

The protein resides in the plastid. It localises to the chloroplast. In terms of biological role, component of the chloroplast ribosome (chloro-ribosome), a dedicated translation machinery responsible for the synthesis of chloroplast genome-encoded proteins, including proteins of the transcription and translation machinery and components of the photosynthetic apparatus. This Spinacia oleracea (Spinach) protein is Large ribosomal subunit protein uL11c (rpl11).